We begin with the raw amino-acid sequence, 262 residues long: Indole-3-glycerol phosphate synthase (262 aa).

The protein belongs to the TrpC family.

It carries out the reaction 1-(2-carboxyphenylamino)-1-deoxy-D-ribulose 5-phosphate + H(+) = (1S,2R)-1-C-(indol-3-yl)glycerol 3-phosphate + CO2 + H2O. It functions in the pathway amino-acid biosynthesis; L-tryptophan biosynthesis; L-tryptophan from chorismate: step 4/5. The protein is Indole-3-glycerol phosphate synthase of Chlorobium luteolum (strain DSM 273 / BCRC 81028 / 2530) (Pelodictyon luteolum).